A 250-amino-acid polypeptide reads, in one-letter code: uncharacterized protein (250 aa).

Positions 15, 17, 36, 56, 57, and 82 each coordinate NAD(+). Ser143 contributes to the substrate binding site. NAD(+)-binding residues include Tyr156, Lys160, Phe189, and Thr191. Tyr156 (proton acceptor) is an active-site residue.

It belongs to the short-chain dehydrogenases/reductases (SDR) family.

This is an uncharacterized protein from Mycobacterium tuberculosis (strain CDC 1551 / Oshkosh).